Consider the following 254-residue polypeptide: 4-hydroxy-tetrahydrodipicolinate reductase (254 aa).

Position 13 to 18 (13 to 18 (GAAGRM)) interacts with NAD(+). Arginine 39 contacts NADP(+). Residues 86-88 (GTT) and 110-113 (AANT) contribute to the NAD(+) site. Histidine 143 (proton donor/acceptor) is an active-site residue. Residue histidine 144 coordinates (S)-2,3,4,5-tetrahydrodipicolinate. The active-site Proton donor is lysine 147. 153-154 (GT) provides a ligand contact to (S)-2,3,4,5-tetrahydrodipicolinate.

Belongs to the DapB family.

The protein localises to the cytoplasm. The enzyme catalyses (S)-2,3,4,5-tetrahydrodipicolinate + NAD(+) + H2O = (2S,4S)-4-hydroxy-2,3,4,5-tetrahydrodipicolinate + NADH + H(+). It catalyses the reaction (S)-2,3,4,5-tetrahydrodipicolinate + NADP(+) + H2O = (2S,4S)-4-hydroxy-2,3,4,5-tetrahydrodipicolinate + NADPH + H(+). It functions in the pathway amino-acid biosynthesis; L-lysine biosynthesis via DAP pathway; (S)-tetrahydrodipicolinate from L-aspartate: step 4/4. Its function is as follows. Catalyzes the conversion of 4-hydroxy-tetrahydrodipicolinate (HTPA) to tetrahydrodipicolinate. This is 4-hydroxy-tetrahydrodipicolinate reductase from Zymomonas mobilis subsp. mobilis (strain ATCC 31821 / ZM4 / CP4).